The sequence spans 503 residues: Cytochrome P450 3A14 (503 aa).

Cys-442 is a binding site for heme.

The protein belongs to the cytochrome P450 family. It depends on heme as a cofactor.

The protein localises to the endoplasmic reticulum membrane. The protein resides in the microsome membrane. The enzyme catalyses an organic molecule + reduced [NADPH--hemoprotein reductase] + O2 = an alcohol + oxidized [NADPH--hemoprotein reductase] + H2O + H(+). Its function is as follows. Cytochromes P450 are a group of heme-thiolate monooxygenases. In liver microsomes, this enzyme is involved in an NADPH-dependent electron transport pathway. It oxidizes a variety of structurally unrelated compounds, including steroids, fatty acids, and xenobiotics. This is Cytochrome P450 3A14 (CYP3A14) from Cavia porcellus (Guinea pig).